The sequence spans 245 residues: Uridylate kinase (245 aa).

20–23 (KLSG) contacts ATP. Glycine 60 provides a ligand contact to UMP. Residues glycine 61 and arginine 65 each contribute to the ATP site. UMP-binding positions include aspartate 80 and 141–148 (AGLPYFST). 2 residues coordinate ATP: tyrosine 175 and aspartate 178.

The protein belongs to the UMP kinase family. In terms of assembly, homohexamer.

The protein localises to the cytoplasm. The enzyme catalyses UMP + ATP = UDP + ADP. Its pathway is pyrimidine metabolism; CTP biosynthesis via de novo pathway; UDP from UMP (UMPK route): step 1/1. Inhibited by UTP. In terms of biological role, catalyzes the reversible phosphorylation of UMP to UDP. This Paenarthrobacter aurescens (strain TC1) protein is Uridylate kinase.